The sequence spans 391 residues: MKSTRKVVGIFLATCLLPFTVLQNVAAQGSCRNPNQKQGQCLSIYDCQSLLSVIQQSYVSPEDRTFLRNSQCLDGVGRQPYVCCTSDRSFGSQEATSAAPPPTTTSSSSRGQDGQAGLGNLLPSPPKCGPHSFSNKVYNGNDTAIDEFNWMALLEYVDNRGRRELSCGGSLINNRYVLTAAHCVIGAVETEVGHLTTVRLGEYDTSKDVDCIDDICNQPILQLGIEQATVHPQYDPANKNRIHDIALLRLDRPVVLNEYIQPVCLPLVSTRMAINTGELLVVSGWGRTTTARKSTIKQRLDLPVNDHDYCARKFATRNIHLISSQLCVGGEFYRDSCDGDSGGPLMRRGFDQAWYQEGVVSFGNRCGLEGWPGVYTRVADYMDWIVETIRP.

Positions 1–27 are cleaved as a signal peptide; the sequence is MKSTRKVVGIFLATCLLPFTVLQNVAA. Positions 28 to 136 are cleaved as a propeptide — activation peptide; that stretch reads QGSCRNPNQK…KCGPHSFSNK (109 aa). The Clip domain maps to 30–84; the sequence is SCRNPNQKQGQCLSIYDCQSLLSVIQQSYVSPEDRTFLRNSQCLDGVGRQPYVCC. Intrachain disulfides connect cysteine 31–cysteine 83, cysteine 41–cysteine 72, and cysteine 47–cysteine 84. The disordered stretch occupies residues 91-121; sequence GSQEATSAAPPPTTTSSSSRGQDGQAGLGNL. Disulfide bonds link cysteine 128/cysteine 264, cysteine 167/cysteine 183, cysteine 211/cysteine 216, cysteine 310/cysteine 327, and cysteine 337/cysteine 366. Residues 137–390 form the Peptidase S1 domain; the sequence is VYNGNDTAID…YMDWIVETIR (254 aa). The N-linked (GlcNAc...) asparagine glycan is linked to asparagine 141. The active-site Charge relay system is the histidine 182. Ca(2+) contacts are provided by glutamate 202, aspartate 204, lysine 207, and aspartate 210. Catalysis depends on aspartate 244, which acts as the Charge relay system. Serine 341 (charge relay system) is an active-site residue.

Belongs to the peptidase S1 family. CLIP subfamily. As to quaternary structure, interacts with Spn27A.

Its subcellular location is the secreted. In terms of biological role, serine protease that, by cleaving and activating prophenoloxidase (PPO1) after immune challenge, plays an essential role in the melanization immune response to septic wounding. May function in diverse Hayan-dependent PPO1-activating cascades that are negatively controlled by different serpin proteins; Spn27A in the hemolymph and Spn77BA in the trachea. Important for the innate immune response to fungi. Regulation of melanization and PPO1 activation appears to be largely independent of the Toll signaling pathway. This is Serine protease 7 from Drosophila melanogaster (Fruit fly).